We begin with the raw amino-acid sequence, 172 residues long: Transcriptional repressor NrdR (172 aa).

A zinc finger lies at Cys-3–Cys-34. Residues Pro-49–Glu-139 form the ATP-cone domain.

The protein belongs to the NrdR family. It depends on Zn(2+) as a cofactor.

Its function is as follows. Negatively regulates transcription of bacterial ribonucleotide reductase nrd genes and operons by binding to NrdR-boxes. In Marinobacter nauticus (strain ATCC 700491 / DSM 11845 / VT8) (Marinobacter aquaeolei), this protein is Transcriptional repressor NrdR.